The sequence spans 302 residues: 4-diphosphocytidyl-2-C-methyl-D-erythritol kinase (302 aa).

K20 is an active-site residue. Position 106–116 (P106–G116) interacts with ATP. Residue D148 is part of the active site.

Belongs to the GHMP kinase family. IspE subfamily.

It catalyses the reaction 4-CDP-2-C-methyl-D-erythritol + ATP = 4-CDP-2-C-methyl-D-erythritol 2-phosphate + ADP + H(+). It functions in the pathway isoprenoid biosynthesis; isopentenyl diphosphate biosynthesis via DXP pathway; isopentenyl diphosphate from 1-deoxy-D-xylulose 5-phosphate: step 3/6. Catalyzes the phosphorylation of the position 2 hydroxy group of 4-diphosphocytidyl-2C-methyl-D-erythritol. The polypeptide is 4-diphosphocytidyl-2-C-methyl-D-erythritol kinase (Bartonella henselae (strain ATCC 49882 / DSM 28221 / CCUG 30454 / Houston 1) (Rochalimaea henselae)).